A 520-amino-acid chain; its full sequence is CBL-interacting serine/threonine-protein kinase 18 (520 aa).

Disordered regions lie at residues 1–29 (MAQA…PHPK) and 48–67 (TDKD…SPRN). Pro residues predominate over residues 17-29 (PDPPPPPPPPHPK). Low complexity predominate over residues 55–66 (SPQSPRSPRSPR). The Protein kinase domain occupies 74–328 (YELGKLLGHG…IPEIMKNRWF (255 aa)). ATP is bound by residues 80–88 (LGHGTFAKV) and K103. Residue D196 is the Proton acceptor of the active site. The activation loop stretch occupies residues 214–243 (DFGLSAVAEQLRQDGLCHTFCGTPAYIAPE). The residue at position 218 (S218) is a Phosphoserine. T232 carries the post-translational modification Phosphothreonine. The tract at residues 349–368 (EDEEEEASSSGRSSTVSESD) is disordered. Low complexity predominate over residues 356-366 (SSSGRSSTVSE). Residues 382–406 (PRPSSLNAFDIISFSSGFDLSGLFE) enclose the NAF domain. The PPI stretch occupies residues 410–439 (GEGTRFVSGAPVSKIISKLEEIAKIVSFTV).

The protein belongs to the protein kinase superfamily. CAMK Ser/Thr protein kinase family. SNF1 subfamily. Interacts with CBL1 and CBL9. Mn(2+) is required as a cofactor.

The enzyme catalyses L-seryl-[protein] + ATP = O-phospho-L-seryl-[protein] + ADP + H(+). The catalysed reaction is L-threonyl-[protein] + ATP = O-phospho-L-threonyl-[protein] + ADP + H(+). CIPK serine-threonine protein kinases interact with CBL proteins. Binding of a CBL protein to the regulatory NAF domain of CIPK protein lead to the activation of the kinase in a calcium-dependent manner. The chain is CBL-interacting serine/threonine-protein kinase 18 (CIPK18) from Arabidopsis thaliana (Mouse-ear cress).